We begin with the raw amino-acid sequence, 328 residues long: Peroxidase 25 (328 aa).

A signal peptide spans 1-26 (MGVYLGKYCYIMIIMLVLVLGKEVRS). Disulfide bonds link Cys-38–Cys-114, Cys-71–Cys-76, Cys-120–Cys-324, and Cys-198–Cys-230. The Proton acceptor role is filled by His-69. Residues Asp-70, Val-73, Gly-75, Asp-77, and Ser-79 each contribute to the Ca(2+) site. A substrate-binding site is contributed by Pro-161. His-191 lines the heme b pocket. A Ca(2+)-binding site is contributed by Thr-192. The N-linked (GlcNAc...) asparagine glycan is linked to Asn-207. 3 residues coordinate Ca(2+): Asp-243, Ser-246, and Asp-251.

Belongs to the peroxidase family. Classical plant (class III) peroxidase subfamily. Heme b serves as cofactor. Requires Ca(2+) as cofactor.

The protein localises to the secreted. The catalysed reaction is 2 a phenolic donor + H2O2 = 2 a phenolic radical donor + 2 H2O. Removal of H(2)O(2), oxidation of toxic reductants, biosynthesis and degradation of lignin, suberization, auxin catabolism, response to environmental stresses such as wounding, pathogen attack and oxidative stress. These functions might be dependent on each isozyme/isoform in each plant tissue. The polypeptide is Peroxidase 25 (PER25) (Arabidopsis thaliana (Mouse-ear cress)).